The sequence spans 664 residues: DNA ligase (664 aa).

Residues 32-36 and 80-81 contribute to the NAD(+) site; these read DKEYD and SL. Lys122 serves as the catalytic N6-AMP-lysine intermediate. NAD(+)-binding residues include Arg144, Glu178, and Lys314. Residues Cys407, Cys410, Cys423, and Cys429 each coordinate Zn(2+). Residues 587-664 enclose the BRCT domain; that stretch reads IDENPFMGKT…NEEEFSNKIK (78 aa).

Belongs to the NAD-dependent DNA ligase family. LigA subfamily. The cofactor is Mg(2+). It depends on Mn(2+) as a cofactor.

The enzyme catalyses NAD(+) + (deoxyribonucleotide)n-3'-hydroxyl + 5'-phospho-(deoxyribonucleotide)m = (deoxyribonucleotide)n+m + AMP + beta-nicotinamide D-nucleotide.. Its function is as follows. DNA ligase that catalyzes the formation of phosphodiester linkages between 5'-phosphoryl and 3'-hydroxyl groups in double-stranded DNA using NAD as a coenzyme and as the energy source for the reaction. It is essential for DNA replication and repair of damaged DNA. The protein is DNA ligase of Clostridium botulinum (strain 657 / Type Ba4).